The following is a 743-amino-acid chain: FHF complex subunit HOOK-interacting protein 2B (743 aa).

Positions 186–219 are disordered; the sequence is CGEPTALPKDTTSHGDKDCSHDGAPARPQLDGES. Basic and acidic residues predominate over residues 196–206; sequence TTSHGDKDCSH.

This sequence belongs to the FHIP family. As to expression, expressed in liver.

In terms of biological role, able to activate MAPK/ERK and TGFB signaling pathways. May regulate the activity of genes involved in intestinal barrier function and immunoprotective inflammation. May play a role in cell proliferation. This Homo sapiens (Human) protein is FHF complex subunit HOOK-interacting protein 2B.